Here is a 400-residue protein sequence, read N- to C-terminus: Enoyl-[acyl-carrier-protein] reductase [NADH] 2 (400 aa).

Residues 48–53, 75–76, 112–113, and 141–142 each bind NAD(+); these read GASSGF, FE, DA, and LA. Tyr228 is a binding site for substrate. The active-site Proton donor is the Tyr238. Residues Lys247 and 276–278 each bind NAD(+); that span reads LVT.

This sequence belongs to the TER reductase family. Monomer.

It carries out the reaction a 2,3-saturated acyl-[ACP] + NAD(+) = a (2E)-enoyl-[ACP] + NADH + H(+). Its pathway is lipid metabolism; fatty acid biosynthesis. Functionally, involved in the final reduction of the elongation cycle of fatty acid synthesis (FAS II). Catalyzes the reduction of a carbon-carbon double bond in an enoyl moiety that is covalently linked to an acyl carrier protein (ACP). The sequence is that of Enoyl-[acyl-carrier-protein] reductase [NADH] 2 from Vibrio vulnificus (strain YJ016).